We begin with the raw amino-acid sequence, 417 residues long: Gamma-glutamyl phosphate reductase (417 aa).

It belongs to the gamma-glutamyl phosphate reductase family.

Its subcellular location is the cytoplasm. It carries out the reaction L-glutamate 5-semialdehyde + phosphate + NADP(+) = L-glutamyl 5-phosphate + NADPH + H(+). The protein operates within amino-acid biosynthesis; L-proline biosynthesis; L-glutamate 5-semialdehyde from L-glutamate: step 2/2. Its function is as follows. Catalyzes the NADPH-dependent reduction of L-glutamate 5-phosphate into L-glutamate 5-semialdehyde and phosphate. The product spontaneously undergoes cyclization to form 1-pyrroline-5-carboxylate. The protein is Gamma-glutamyl phosphate reductase of Klebsiella pneumoniae (strain 342).